The sequence spans 483 residues: ATP-dependent RNA helicase DDX25 (483 aa).

Residues Leu61–Ser74 carry the Nuclear export signal motif. The Q motif signature appears at Lys97–Glu125. A Nuclear localization signal motif is present at residues Glu100–Ala114. Positions Met130–Ile300 constitute a Helicase ATP-binding domain. Ser143–Thr150 provides a ligand contact to ATP. Residues Asp247–Asp250 carry the DEAD box motif. The Helicase C-terminal domain occupies Asn311–Ile478.

Belongs to the DEAD box helicase family. Post-translationally, phosphorylated on threonine residues. The phosphorylated form is found in the cytoplasm but not in the nucleus.

It localises to the cytoplasm. Its subcellular location is the nucleus. It catalyses the reaction ATP + H2O = ADP + phosphate + H(+). Its function is as follows. ATP-dependent RNA helicase. Required for mRNA export and translation regulation during spermatid development. This is ATP-dependent RNA helicase DDX25 (DDX25) from Bos taurus (Bovine).